A 138-amino-acid polypeptide reads, in one-letter code: UPF0310 protein MAV_1800 (138 aa).

Belongs to the UPF0310 family.

This Mycobacterium avium (strain 104) protein is UPF0310 protein MAV_1800.